Here is a 445-residue protein sequence, read N- to C-terminus: GTPase Der (445 aa).

2 EngA-type G domains span residues 3-166 (PVIA…AERV) and 180-353 (IRIG…ESCY). GTP contacts are provided by residues 9-16 (GRPNVGKS), 56-60 (DTGGI), 118-121 (NKTD), 186-193 (GRPNVGKS), 233-237 (DTAGI), and 298-301 (NKWD). The KH-like domain maps to 354-438 (AKWTTNRLTR…PIIFEFKSAE (85 aa)).

This sequence belongs to the TRAFAC class TrmE-Era-EngA-EngB-Septin-like GTPase superfamily. EngA (Der) GTPase family. Associates with the 50S ribosomal subunit.

Its function is as follows. GTPase that plays an essential role in the late steps of ribosome biogenesis. This Marinomonas sp. (strain MWYL1) protein is GTPase Der.